Here is a 1172-residue protein sequence, read N- to C-terminus: Carbamoyl phosphate synthase arginine-specific large chain, chloroplastic (1172 aa).

Polar residues predominate over residues Met1–Thr10. The disordered stretch occupies residues Met1–His37. The N-terminal 50 residues, Met1–Arg50, are a transit peptide targeting the chloroplast. Positions Gly72–Glu473 are carboxyphosphate synthetic domain. 12 residues coordinate ATP: Arg199, Arg240, Gly246, Gly247, Lys279, Leu281, Glu286, Gly312, Val313, His314, Gln356, and Glu370. The region spanning Lys203–Val399 is the ATP-grasp 1 domain. Gln356, Glu370, and Asn372 together coordinate Mg(2+). Residues Thr474–Ser623 form an oligomerization domain region. Residues Val624–Ala1019 are carbamoyl phosphate synthetic domain. In terms of domain architecture, ATP-grasp 2 spans Asn761–Ser954. ATP contacts are provided by Arg797, Lys836, Leu838, Glu843, Gly869, Ile870, His871, Ser872, Gln912, and Glu925. The Mg(2+) site is built by Gln912, Glu925, and Asn927. The tract at residues Gly1020–Ser1172 is allosteric domain. Residues Gln1021–Ser1162 form the MGS-like domain.

Belongs to the CarB family. Heterodimer composed of 2 chains; the small (or glutamine) chain promotes the hydrolysis of glutamine to ammonia, which is used by the large (or ammonia) chain to synthesize carbamoyl phosphate. Mg(2+) serves as cofactor. Mn(2+) is required as a cofactor.

It is found in the plastid. Its subcellular location is the chloroplast. The enzyme catalyses hydrogencarbonate + L-glutamine + 2 ATP + H2O = carbamoyl phosphate + L-glutamate + 2 ADP + phosphate + 2 H(+). It catalyses the reaction hydrogencarbonate + NH4(+) + 2 ATP = carbamoyl phosphate + 2 ADP + phosphate + 2 H(+). The protein operates within amino-acid biosynthesis; L-arginine biosynthesis; carbamoyl phosphate from bicarbonate: step 1/1. In terms of biological role, large subunit of the arginine-specific carbamoyl phosphate synthase (CPSase). CPSase catalyzes the formation of carbamoyl phosphate from the ammonia moiety of glutamine, hydrogencarbonate, and phosphate donated by ATP, constituting the first step of 2 biosynthetic pathways, one leading to arginine and/or urea and the other to pyrimidine nucleotides. The large subunit (synthetase) binds the substrates ammonia (free or transferred from glutamine from the small subunit), hydrogencarbonate and ATP and carries out an ATP-coupled ligase reaction, activating hydrogencarbonate by forming carboxy phosphate which reacts with ammonia to form carbamoyl phosphate. The polypeptide is Carbamoyl phosphate synthase arginine-specific large chain, chloroplastic (CARB) (Oryza sativa subsp. japonica (Rice)).